The primary structure comprises 673 residues: UvrABC system protein B (673 aa).

The region spanning 26–183 (EGLEDGLAHQ…RRLAELQYTR (158 aa)) is the Helicase ATP-binding domain. ATP is bound at residue 39–46 (GVTGSGKT). Residues 92-115 (YYDYYQPEAYVPSSDTFIEKDASV) carry the Beta-hairpin motif. A Helicase C-terminal domain is found at 431–597 (QVDDLLSEIR…GLNKKVVDIL (167 aa)). One can recognise a UVR domain in the interval 633-668 (QQKIHELEGQMMQHAQNLEFEEAAQIRDQLHQLREL).

This sequence belongs to the UvrB family. As to quaternary structure, forms a heterotetramer with UvrA during the search for lesions. Interacts with UvrC in an incision complex.

The protein resides in the cytoplasm. Functionally, the UvrABC repair system catalyzes the recognition and processing of DNA lesions. A damage recognition complex composed of 2 UvrA and 2 UvrB subunits scans DNA for abnormalities. Upon binding of the UvrA(2)B(2) complex to a putative damaged site, the DNA wraps around one UvrB monomer. DNA wrap is dependent on ATP binding by UvrB and probably causes local melting of the DNA helix, facilitating insertion of UvrB beta-hairpin between the DNA strands. Then UvrB probes one DNA strand for the presence of a lesion. If a lesion is found the UvrA subunits dissociate and the UvrB-DNA preincision complex is formed. This complex is subsequently bound by UvrC and the second UvrB is released. If no lesion is found, the DNA wraps around the other UvrB subunit that will check the other stand for damage. The chain is UvrABC system protein B from Salmonella agona (strain SL483).